We begin with the raw amino-acid sequence, 108 residues long: Nucleoid-associated protein BPP1222 (108 aa).

The disordered stretch occupies residues 86–108; it reads TSQEKMASVTAGMPLPPGMKLPF. The segment covering 99–108 has biased composition (pro residues); it reads PLPPGMKLPF.

This sequence belongs to the YbaB/EbfC family. Homodimer.

It localises to the cytoplasm. It is found in the nucleoid. Its function is as follows. Binds to DNA and alters its conformation. May be involved in regulation of gene expression, nucleoid organization and DNA protection. The protein is Nucleoid-associated protein BPP1222 of Bordetella parapertussis (strain 12822 / ATCC BAA-587 / NCTC 13253).